The sequence spans 438 residues: Xylose isomerase (438 aa).

Active-site residues include histidine 100 and aspartate 103. Positions 231, 267, 270, 295, 306, 308, and 338 each coordinate Mg(2+).

Belongs to the xylose isomerase family. As to quaternary structure, homotetramer. Requires Mg(2+) as cofactor.

Its subcellular location is the cytoplasm. The catalysed reaction is alpha-D-xylose = alpha-D-xylulofuranose. The chain is Xylose isomerase from Pseudomonas syringae pv. syringae (strain B728a).